The following is a 251-amino-acid chain: Ubiquinone/menaquinone biosynthesis C-methyltransferase UbiE (251 aa).

S-adenosyl-L-methionine-binding positions include threonine 74, aspartate 95, 123-124, and serine 140; that span reads NA.

Belongs to the class I-like SAM-binding methyltransferase superfamily. MenG/UbiE family.

The enzyme catalyses a 2-demethylmenaquinol + S-adenosyl-L-methionine = a menaquinol + S-adenosyl-L-homocysteine + H(+). It carries out the reaction a 2-methoxy-6-(all-trans-polyprenyl)benzene-1,4-diol + S-adenosyl-L-methionine = a 5-methoxy-2-methyl-3-(all-trans-polyprenyl)benzene-1,4-diol + S-adenosyl-L-homocysteine + H(+). Its pathway is quinol/quinone metabolism; menaquinone biosynthesis; menaquinol from 1,4-dihydroxy-2-naphthoate: step 2/2. It participates in cofactor biosynthesis; ubiquinone biosynthesis. Its function is as follows. Methyltransferase required for the conversion of demethylmenaquinol (DMKH2) to menaquinol (MKH2) and the conversion of 2-polyprenyl-6-methoxy-1,4-benzoquinol (DDMQH2) to 2-polyprenyl-3-methyl-6-methoxy-1,4-benzoquinol (DMQH2). The chain is Ubiquinone/menaquinone biosynthesis C-methyltransferase UbiE from Escherichia coli O9:H4 (strain HS).